The chain runs to 856 residues: Phosphoenolpyruvate synthase (856 aa).

His433 serves as the catalytic Tele-phosphohistidine intermediate. Residues Arg523, Arg636, Glu738, Gly759, Ser760, Asn761, and Asp762 each coordinate substrate. Glu738 serves as a coordination point for Mg(2+). Asp762 contacts Mg(2+). Residue Cys809 is the Proton donor of the active site.

This sequence belongs to the PEP-utilizing enzyme family. Requires Mg(2+) as cofactor.

It catalyses the reaction pyruvate + ATP + H2O = phosphoenolpyruvate + AMP + phosphate + 2 H(+). Its pathway is carbohydrate biosynthesis; gluconeogenesis. Catalyzes the phosphorylation of pyruvate to phosphoenolpyruvate. The polypeptide is Phosphoenolpyruvate synthase (ppsA) (Aquifex aeolicus (strain VF5)).